We begin with the raw amino-acid sequence, 396 residues long: Tryptophan synthase beta chain (396 aa).

N6-(pyridoxal phosphate)lysine is present on lysine 96.

Belongs to the TrpB family. As to quaternary structure, tetramer of two alpha and two beta chains. The cofactor is pyridoxal 5'-phosphate.

It catalyses the reaction (1S,2R)-1-C-(indol-3-yl)glycerol 3-phosphate + L-serine = D-glyceraldehyde 3-phosphate + L-tryptophan + H2O. Its pathway is amino-acid biosynthesis; L-tryptophan biosynthesis; L-tryptophan from chorismate: step 5/5. The beta subunit is responsible for the synthesis of L-tryptophan from indole and L-serine. The protein is Tryptophan synthase beta chain of Azobacteroides pseudotrichonymphae genomovar. CFP2.